The following is a 235-amino-acid chain: Small heat shock protein, chloroplastic (235 aa).

Disordered stretches follow at residues 1 to 23 and 51 to 80; these read MAYT…TSKI and TGDN…ERRP. The span at 52–63 shows a compositional bias: basic and acidic residues; it reads GDNKDTSVDVHH. Over residues 64-74 the composition is skewed to polar residues; sequence SSAQGGNNQGT. A sHSP domain is found at 126 to 235; that stretch reads SGTGEIRTPW…EKKVIDVQIN (110 aa).

It belongs to the small heat shock protein (HSP20) family. As to expression, in fruits, flowers, leaves, and stems.

It is found in the plastid. The protein resides in the chloroplast. The sequence is that of Small heat shock protein, chloroplastic (HSP21) from Solanum lycopersicum (Tomato).